The sequence spans 285 residues: Phosphate import ATP-binding protein PstB (285 aa).

The ABC transporter domain maps to 22–262 (MRAVDLTLGF…PQHEETVRYF (241 aa)). Residue 54 to 61 (GPTGSGKT) participates in ATP binding. Residues 266–285 (RPAQGSDRGSSQTAGVAESQ) form a disordered region. Positions 272-285 (DRGSSQTAGVAESQ) are enriched in polar residues.

It belongs to the ABC transporter superfamily. Phosphate importer (TC 3.A.1.7) family. The complex is composed of two ATP-binding proteins (PstB), two transmembrane proteins (PstC and PstA) and a solute-binding protein (PstS).

The protein localises to the cell membrane. The enzyme catalyses phosphate(out) + ATP + H2O = ADP + 2 phosphate(in) + H(+). In terms of biological role, part of the ABC transporter complex PstSACB involved in phosphate import. Responsible for energy coupling to the transport system. The sequence is that of Phosphate import ATP-binding protein PstB from Mycobacterium intracellulare.